Consider the following 238-residue polypeptide: 1-(5-phosphoribosyl)-5-[(5-phosphoribosylamino)methylideneamino] imidazole-4-carboxamide isomerase (238 aa).

Aspartate 8 acts as the Proton acceptor in catalysis. Aspartate 127 (proton donor) is an active-site residue.

The protein belongs to the HisA/HisF family.

The protein localises to the cytoplasm. The enzyme catalyses 1-(5-phospho-beta-D-ribosyl)-5-[(5-phospho-beta-D-ribosylamino)methylideneamino]imidazole-4-carboxamide = 5-[(5-phospho-1-deoxy-D-ribulos-1-ylimino)methylamino]-1-(5-phospho-beta-D-ribosyl)imidazole-4-carboxamide. It participates in amino-acid biosynthesis; L-histidine biosynthesis; L-histidine from 5-phospho-alpha-D-ribose 1-diphosphate: step 4/9. The chain is 1-(5-phosphoribosyl)-5-[(5-phosphoribosylamino)methylideneamino] imidazole-4-carboxamide isomerase from Nitratiruptor sp. (strain SB155-2).